The chain runs to 292 residues: NAD(P)H-hydrate epimerase (292 aa).

Residues 1-52 constitute a mitochondrion transit peptide; that stretch reads MYGLRTLFSLGLLVGGARLGARVAQVGALGGTCPLGQGLVADGNSQCKQFRT. Residues 68 to 279 enclose the YjeF N-terminal domain; that stretch reads AQAVDEELFN…ALEKKYSLNL (212 aa). 122 to 126 provides a ligand contact to (6S)-NADPHX; the sequence is NNGGD. The K(+) site is built by N123 and D189. (6S)-NADPHX-binding positions include 193–199 and D222; that span reads GFSFKGA. K(+) is bound at residue S225.

Belongs to the NnrE/AIBP family. The cofactor is K(+).

Its subcellular location is the mitochondrion. It localises to the secreted. It catalyses the reaction (6R)-NADHX = (6S)-NADHX. The enzyme catalyses (6R)-NADPHX = (6S)-NADPHX. Functionally, catalyzes the epimerization of the S- and R-forms of NAD(P)HX, a damaged form of NAD(P)H that is a result of enzymatic or heat-dependent hydration. This is a prerequisite for the S-specific NAD(P)H-hydrate dehydratase to allow the repair of both epimers of NAD(P)HX. The protein is NAD(P)H-hydrate epimerase of Xenopus tropicalis (Western clawed frog).